Consider the following 544-residue polypeptide: Chaperonin GroEL (544 aa).

ATP contacts are provided by residues Thr-30–Pro-33, Lys-51, Asp-87–Thr-91, Gly-415, Asn-479–Ala-481, and Asp-495.

It belongs to the chaperonin (HSP60) family. In terms of assembly, forms a cylinder of 14 subunits composed of two heptameric rings stacked back-to-back. Interacts with the co-chaperonin GroES.

It is found in the cytoplasm. It carries out the reaction ATP + H2O + a folded polypeptide = ADP + phosphate + an unfolded polypeptide.. Together with its co-chaperonin GroES, plays an essential role in assisting protein folding. The GroEL-GroES system forms a nano-cage that allows encapsulation of the non-native substrate proteins and provides a physical environment optimized to promote and accelerate protein folding. In Francisella tularensis subsp. novicida (strain U112), this protein is Chaperonin GroEL.